The primary structure comprises 249 residues: Carboxy-S-adenosyl-L-methionine synthase (249 aa).

S-adenosyl-L-methionine is bound by residues tyrosine 39, 64–66 (GCS), 117–118 (DI), asparagine 132, and arginine 199.

The protein belongs to the class I-like SAM-binding methyltransferase superfamily. Cx-SAM synthase family. As to quaternary structure, homodimer.

It catalyses the reaction prephenate + S-adenosyl-L-methionine = carboxy-S-adenosyl-L-methionine + 3-phenylpyruvate + H2O. Its function is as follows. Catalyzes the conversion of S-adenosyl-L-methionine (SAM) to carboxy-S-adenosyl-L-methionine (Cx-SAM). This Aeromonas hydrophila subsp. hydrophila (strain ATCC 7966 / DSM 30187 / BCRC 13018 / CCUG 14551 / JCM 1027 / KCTC 2358 / NCIMB 9240 / NCTC 8049) protein is Carboxy-S-adenosyl-L-methionine synthase.